The primary structure comprises 341 residues: Ribulose-5-phosphate reductase 2 (341 aa).

Residues C38, H64, E65, and E144 each coordinate Zn(2+).

The protein belongs to the zinc-containing alcohol dehydrogenase family. In terms of assembly, heterodimer together with TarI. Zn(2+) serves as cofactor.

The enzyme catalyses D-ribitol 5-phosphate + NADP(+) = D-ribulose 5-phosphate + NADPH + H(+). It participates in cell wall biogenesis; poly(ribitol phosphate) teichoic acid biosynthesis. Its function is as follows. Catalyzes the NADPH dependent reduction of D-ribulose 5-phosphate to D-ribitol 5-phosphate. This chain is Ribulose-5-phosphate reductase 2, found in Staphylococcus aureus (strain NCTC 8325 / PS 47).